Here is a 459-residue protein sequence, read N- to C-terminus: MEGRVSPVGSSHRLLTAAVLFRGPVEPLVFLANFALVLQGPLTTQYIWHRISTELGYNGTRHRENCGNQSADPVLKEVETLTSHWTLYMNVGGFLVGLFWSTLLGAWSDRVGRRPLLVLASLGLLLQAVVSIFVVQLQLHIGFFVLGRALCALLGDFNGLLAASFASVADVSSNHSRTFRMALLEACIGVAGTLASLLGGHWLRAQGYANPFWLALAVLIVMTLYAAFCFGETVKEPKSTRLFTLRHHRSIVQLYVVPAPEKSRMHLALYSLAIFVVVTVHFGAQDILTLYELSTPLCWDSKLIGYGSAAQHLPYLTSLLGLRLLQFCLADTWVAEIGLAFNILGMVVFAFATITPLMFTGYGLLFLSLVTTPVIRAKLSKLVSESEQGALFSAVACVNSLAMLMASGIFNSLYPATLNFMKGFPFLLGAGLLFIPAILIGVLEKVNPHPEFQQFPQNS.

Met1 carries the N-acetylmethionine modification. Over Met1–Val25 the chain is Cytoplasmic. Ser6 is subject to Phosphoserine. The helical transmembrane segment at Glu26–Thr44 threads the bilayer. Residues Gln45–Thr82 lie on the Extracellular side of the membrane. N-linked (GlcNAc...) asparagine glycans are attached at residues Asn58 and Asn68. A disulfide bridge links Cys66 with Cys298. A helical membrane pass occupies residues Ser83 to Ser108. Residues Asp109–Gly112 lie on the Cytoplasmic side of the membrane. Residues Arg113 to Val135 traverse the membrane as a helical segment. Topologically, residues Gln136–His140 are extracellular. The chain crosses the membrane as a helical span at residues Ile141–Leu154. Residues Gly155–Arg177 are Cytoplasmic-facing. Residues Asp156 and Glu185 each contribute to the H(+) site. The chain crosses the membrane as a helical span at residues Thr178 to Leu203. The Extracellular portion of the chain corresponds to Arg204 to Tyr208. A helical transmembrane segment spans residues Ala209 to Ala227. Residues Phe228 to His266 are Cytoplasmic-facing. A helical membrane pass occupies residues Leu267 to Thr289. H(+) is bound at residue His281. Topologically, residues Leu290–Lys302 are extracellular. The helical transmembrane segment at Leu303–Leu325 threads the bilayer. Over Gln326–Asp331 the chain is Cytoplasmic. The helical transmembrane segment at Thr332–Phe351 threads the bilayer. Residues Ala352–Thr355 are Extracellular-facing. A helical transmembrane segment spans residues Pro356–Arg376. Residues Ala377–Gln388 are Cytoplasmic-facing. Residues Gly389–Tyr414 traverse the membrane as a helical segment. The Extracellular portion of the chain corresponds to Pro415–Lys422. A helical membrane pass occupies residues Gly423–Gly441. Topologically, residues Val442–Ser459 are cytoplasmic.

Belongs to the major facilitator superfamily. SLC46A family. In terms of assembly, monomer. Expressed almost exclusively in the small intestine: expressed at high level in the upper half of the small intestine (duodenum and jejunum), expression decreases downwardly in the subsequent quarter and is undetectable in the last quarter (the lowest ileum). Expressed at low level in other tissues, including liver.

It is found in the cell membrane. The protein localises to the apical cell membrane. It localises to the basolateral cell membrane. Its subcellular location is the endosome membrane. The protein resides in the cytoplasm. It catalyses the reaction folate(in) + H(+)(in) = folate(out) + H(+)(out). The catalysed reaction is (6S)-5-methyl-5,6,7,8-tetrahydrofolate(in) + H(+)(in) = (6S)-5-methyl-5,6,7,8-tetrahydrofolate(out) + H(+)(out). It carries out the reaction methotrexate(in) + H(+)(in) = methotrexate(out) + H(+)(out). The enzyme catalyses pemetrexed(in) + H(+)(in) = pemetrexed(out) + H(+)(out). Its activity is regulated as follows. In contrast to human ortholog, not inhibited by myricetin. Functionally, proton-coupled folate symporter that mediates folate absorption using an H(+) gradient as a driving force. Involved in the intestinal absorption of folates at the brush-border membrane of the proximal jejunum, and the transport from blood to cerebrospinal fluid across the choroid plexus. Functions at acidic pH via alternate outward- and inward-open conformation states. Protonation of residues in the outward open state primes the protein for transport. Binding of folate promotes breaking of salt bridge network and subsequent closure of the extracellular gate, leading to the inward-open state and release of protons and folate. Also able to transport antifolate drugs, such as methotrexate and pemetrexed. Involved in FOLR1-mediated endocytosis by serving as a route of export of folates from acidified endosomes. Also acts as a lower-affinity, pH-independent heme carrier protein and constitutes the main importer of heme in the intestine. Imports heme in the retina and retinal pigment epithelium, in neurons of the hippocampus, in hepatocytes and in the renal epithelial cells. Hence, participates in the trafficking of heme and increases intracellular iron content. This chain is Proton-coupled folate transporter, found in Rattus norvegicus (Rat).